The sequence spans 306 residues: N(1)-aminopropylagmatine ureohydrolase (306 aa).

Mn(2+) is bound by residues His121, Asp145, His147, Asp149, Asp228, and Asp230.

It belongs to the arginase family. Mn(2+) is required as a cofactor.

The enzyme catalyses N(1)-(3-aminopropyl)agmatine + H2O = urea + spermidine. The protein operates within amine and polyamine biosynthesis; spermidine biosynthesis. In terms of biological role, ureohydrolase involved in the biosynthesis of spermidine via the carboxyaminopropylagmatine (CAPA) pathway. Catalyzes the conversion of aminopropylagmatine (APA) to spermidine and urea. Is highly specific to APA and incapable of releasing measurable urea from CAPA, agmatine, arginine, guanidine, guanidinobutyrate and guanidinopropionate. The protein is N(1)-aminopropylagmatine ureohydrolase of Synechocystis sp. (strain ATCC 27184 / PCC 6803 / Kazusa).